We begin with the raw amino-acid sequence, 259 residues long: Imidazole glycerol phosphate synthase subunit HisF (259 aa).

Active-site residues include Asp11 and Asp130.

It belongs to the HisA/HisF family. In terms of assembly, heterodimer of HisH and HisF.

The protein resides in the cytoplasm. It carries out the reaction 5-[(5-phospho-1-deoxy-D-ribulos-1-ylimino)methylamino]-1-(5-phospho-beta-D-ribosyl)imidazole-4-carboxamide + L-glutamine = D-erythro-1-(imidazol-4-yl)glycerol 3-phosphate + 5-amino-1-(5-phospho-beta-D-ribosyl)imidazole-4-carboxamide + L-glutamate + H(+). It functions in the pathway amino-acid biosynthesis; L-histidine biosynthesis; L-histidine from 5-phospho-alpha-D-ribose 1-diphosphate: step 5/9. In terms of biological role, IGPS catalyzes the conversion of PRFAR and glutamine to IGP, AICAR and glutamate. The HisF subunit catalyzes the cyclization activity that produces IGP and AICAR from PRFAR using the ammonia provided by the HisH subunit. In Solidesulfovibrio magneticus (strain ATCC 700980 / DSM 13731 / RS-1) (Desulfovibrio magneticus), this protein is Imidazole glycerol phosphate synthase subunit HisF.